The sequence spans 98 residues: MVAIHKPAHDIILKPVVSEKSYALSDMGQYTFVVAPNANKVQIKQAIEEIFKVKVTNVNTLNRAGKRTRTRTGYGRRVNQKRAIVTVAEGQSIDIFGN.

It belongs to the universal ribosomal protein uL23 family. In terms of assembly, part of the 50S ribosomal subunit. Contacts protein L29, and trigger factor when it is bound to the ribosome.

Its function is as follows. One of the early assembly proteins it binds 23S rRNA. One of the proteins that surrounds the polypeptide exit tunnel on the outside of the ribosome. Forms the main docking site for trigger factor binding to the ribosome. This chain is Large ribosomal subunit protein uL23, found in Bifidobacterium animalis subsp. lactis (strain AD011).